We begin with the raw amino-acid sequence, 945 residues long: Endo-1,4-beta-xylanase 1 (945 aa).

A compositionally biased stretch (basic and acidic residues) spans 16-41 (NGDRNPDKKSRESMEVSRKDNEEPEK). Residues 16-50 (NGDRNPDKKSRESMEVSRKDNEEPEKQNNNNVASI) are disordered. CBM-cenC domains follow at residues 57 to 197 (NVIV…EGPS), 227 to 362 (IVVN…IEGP), and 397 to 541 (NILT…GPSS). Residues Asn86, Asn239, Asn305, Asn349, Asn417, Asn453, and Asn687 are each glycosylated (N-linked (GlcNAc...) asparagine). Residues 589 to 884 (SGASVRVRQI…NEAGKRFLAV (296 aa)) enclose the GH10 domain. The active-site Proton donor is the Glu718. Glu819 serves as the catalytic Nucleophile.

Belongs to the glycosyl hydrolase 10 (cellulase F) family. As to expression, predominantly expressed in vascular bundles, but not in vessel cells. Mostly expressed in stems, at lower levels in roots, and weakly in inflorescences and seedlings.

The protein localises to the secreted. It is found in the cell wall. The catalysed reaction is Endohydrolysis of (1-&gt;4)-beta-D-xylosidic linkages in xylans.. It functions in the pathway glycan degradation; xylan degradation. Functionally, binds to and hydrolyzes insoluble and soluble xylan substrates. Exhibits xylanase activity. The chain is Endo-1,4-beta-xylanase 1 from Arabidopsis thaliana (Mouse-ear cress).